A 335-amino-acid polypeptide reads, in one-letter code: 4-hydroxythreonine-4-phosphate dehydrogenase (335 aa).

Thr-132 serves as a coordination point for substrate. His-163, His-208, and His-263 together coordinate a divalent metal cation. Residues Lys-271, Asn-280, and Arg-289 each contribute to the substrate site.

Belongs to the PdxA family. In terms of assembly, homodimer. Requires Zn(2+) as cofactor. Mg(2+) serves as cofactor. Co(2+) is required as a cofactor.

Its subcellular location is the cytoplasm. The catalysed reaction is 4-(phosphooxy)-L-threonine + NAD(+) = 3-amino-2-oxopropyl phosphate + CO2 + NADH. Its pathway is cofactor biosynthesis; pyridoxine 5'-phosphate biosynthesis; pyridoxine 5'-phosphate from D-erythrose 4-phosphate: step 4/5. Functionally, catalyzes the NAD(P)-dependent oxidation of 4-(phosphooxy)-L-threonine (HTP) into 2-amino-3-oxo-4-(phosphooxy)butyric acid which spontaneously decarboxylates to form 3-amino-2-oxopropyl phosphate (AHAP). The protein is 4-hydroxythreonine-4-phosphate dehydrogenase of Zymomonas mobilis subsp. mobilis (strain ATCC 31821 / ZM4 / CP4).